A 505-amino-acid chain; its full sequence is Glycerol kinase (505 aa).

Position 17 (Thr17) interacts with ADP. ATP is bound by residues Thr17, Thr18, and Ser19. Thr17 lines the sn-glycerol 3-phosphate pocket. Arg21 is an ADP binding site. Arg87, Glu88, Tyr139, and Asp250 together coordinate sn-glycerol 3-phosphate. Positions 87, 88, 139, 250, and 251 each coordinate glycerol. 2 residues coordinate ADP: Thr272 and Gly315. ATP is bound by residues Thr272, Gly315, Gln319, and Gly416. Gly416 and Asn420 together coordinate ADP.

Belongs to the FGGY kinase family.

It carries out the reaction glycerol + ATP = sn-glycerol 3-phosphate + ADP + H(+). It participates in polyol metabolism; glycerol degradation via glycerol kinase pathway; sn-glycerol 3-phosphate from glycerol: step 1/1. With respect to regulation, inhibited by fructose 1,6-bisphosphate (FBP). Functionally, key enzyme in the regulation of glycerol uptake and metabolism. Catalyzes the phosphorylation of glycerol to yield sn-glycerol 3-phosphate. The protein is Glycerol kinase of Azotobacter vinelandii (strain DJ / ATCC BAA-1303).